Reading from the N-terminus, the 222-residue chain is Octanoyltransferase (222 aa).

The BPL/LPL catalytic domain occupies 35–210 (ETTPDELWLV…EFVHLLGYPK (176 aa)). Substrate is bound by residues 74–81 (RGGQVTYH), 141–143 (SLG), and 154–156 (GLA). The Acyl-thioester intermediate role is filled by Cys172.

This sequence belongs to the LipB family.

It localises to the cytoplasm. It carries out the reaction octanoyl-[ACP] + L-lysyl-[protein] = N(6)-octanoyl-L-lysyl-[protein] + holo-[ACP] + H(+). The protein operates within protein modification; protein lipoylation via endogenous pathway; protein N(6)-(lipoyl)lysine from octanoyl-[acyl-carrier-protein]: step 1/2. Its function is as follows. Catalyzes the transfer of endogenously produced octanoic acid from octanoyl-acyl-carrier-protein onto the lipoyl domains of lipoate-dependent enzymes. Lipoyl-ACP can also act as a substrate although octanoyl-ACP is likely to be the physiological substrate. This Serratia proteamaculans (strain 568) protein is Octanoyltransferase.